Reading from the N-terminus, the 119-residue chain is Large ribosomal subunit protein P3 (119 aa).

Residues 81–119 (GAAAGAASGGAAAEAPKAEEKKEEEKEESEDDLGFSLFD) form a disordered region. Residues 84–95 (AGAASGGAAAEA) are compositionally biased toward low complexity.

This sequence belongs to the eukaryotic ribosomal protein P1/P2 family. In terms of processing, phosphorylated.

Its function is as follows. Plays an important role in the elongation step of protein synthesis. The sequence is that of Large ribosomal subunit protein P3 from Oryza sativa subsp. japonica (Rice).